Consider the following 82-residue polypeptide: Transcription elongation factor 1 homolog (82 aa).

Residues Cys26, Cys29, Cys50, and Cys53 each contribute to the Zn(2+) site.

Belongs to the ELOF1 family.

It is found in the nucleus. In terms of biological role, transcription elongation factor implicated in the maintenance of proper chromatin structure in actively transcribed regions. This chain is Transcription elongation factor 1 homolog, found in Drosophila melanogaster (Fruit fly).